A 223-amino-acid chain; its full sequence is UPF0441 protein ETA_04310 (223 aa).

The disordered stretch occupies residues 166-223 (YGAATPGRTMTVPKSALAPKPATTSTVTRGGFGESVAKQNTMQRNSSSTGSANRSMGG). Residues 202–223 (AKQNTMQRNSSSTGSANRSMGG) show a composition bias toward polar residues.

The protein belongs to the UPF0441 family.

This Erwinia tasmaniensis (strain DSM 17950 / CFBP 7177 / CIP 109463 / NCPPB 4357 / Et1/99) protein is UPF0441 protein ETA_04310.